The sequence spans 135 residues: Cytochrome b5 (135 aa).

Residues 4–80 (SKVYSLAEVS…MDEMCVGDID (77 aa)) form the Cytochrome b5 heme-binding domain. 2 residues coordinate heme: His39 and His63. The chain crosses the membrane as a helical span at residues 106–126 (FIIKLLQFLVPLIILGVAVGI).

This sequence belongs to the cytochrome b5 family.

The protein resides in the endoplasmic reticulum membrane. The protein localises to the microsome membrane. In terms of biological role, membrane bound hemoprotein which function as an electron carrier for several membrane bound oxygenases. The sequence is that of Cytochrome b5 from Cuscuta reflexa (Southern Asian dodder).